A 664-amino-acid chain; its full sequence is Xyloglucan-specific galacturonosyltransferase 1 (664 aa).

The segment covering 1–21 (MSLSKHLQKLVHKRESKKQPN) has biased composition (basic residues). The interval 1-49 (MSLSKHLQKLVHKRESKKQPNKKMPVSVSKLRRPRTSKKTETGNPEKTL) is disordered. Residues 1-71 (MSLSKHLQKL…IFSARSFLYR (71 aa)) are Cytoplasmic-facing. Residues 72–92 (VPLTILFLFLIYLWSTSTTVI) traverse the membrane as a helical; Signal-anchor for type II membrane protein segment. Topologically, residues 93–664 (SGNVVHICIS…SLFKKIAKTV (572 aa)) are lumenal. 7 N-linked (GlcNAc...) asparagine glycosylation sites follow: Asn126, Asn158, Asn175, Asn181, Asn355, Asn379, and Asn522.

This sequence belongs to the glycosyltransferase 47 family. Root hair specific. Expressed in roots and young leaves.

The protein resides in the golgi apparatus membrane. In terms of biological role, xyloglucan-specific galacturonosyltransferase that forms the beta-D-galactosyluronic acid-(1-&gt;2)-alpha-D-xylosyl linkage. Required for root hair development probably by providing important acidic xyloglucans. The protein is Xyloglucan-specific galacturonosyltransferase 1 of Arabidopsis thaliana (Mouse-ear cress).